Reading from the N-terminus, the 336-residue chain is MSEALYIFYALPYICFAIFVIGTIYRVVDWARSAVPLKIPTTSAQQPSFKFVRRTWIDKIDSPSSKFWAFVRVLFVVFLFRDLFRNTRYYIEMGGKNVDTRWLWLFAILFHYSLLVIVIRHLRFFTNPVPDFVKTLEYLDGVLGVAIVPPLLMTGVIALVALAFLWGRRILLAKERSISIPSDHLILFFMAVILVSGLLMRYIIKADLSYVKMFALSVVTFQPPSPEVLANLHWLFLIHFTFVCITIAYIPFSKVMHFAGVWFSPTRNMPNDNRRKRHVNPWDPNPELPILVREGITVAGVTYKCKKLDWDTYYEMYKDQLDEIAEKNYTLKAEEF.

6 helical membrane-spanning segments follow: residues 4 to 24 (ALYI…IGTI), 60 to 80 (IDSP…VFLF), 102 to 122 (WLWL…IRHL), 145 to 165 (VAIV…LAFL), 184 to 204 (HLIL…RYII), and 232 to 252 (LHWL…YIPF).

It localises to the cell membrane. Functionally, has menaquinol-oxidizing activity. The HmeC and HmeD subunits may together mediate electron transfer from menaquinol to an unidentified electron acceptor on the cytoplasmic side of the membrane. This Archaeoglobus profundus (strain DSM 5631 / JCM 9629 / NBRC 100127 / Av18) protein is Hdr-like menaquinol oxidoreductase cytochrome b-like subunit (hmeC).